The chain runs to 215 residues: ATP phosphoribosyltransferase (215 aa).

It belongs to the ATP phosphoribosyltransferase family. Short subfamily. In terms of assembly, heteromultimer composed of HisG and HisZ subunits.

The protein resides in the cytoplasm. The catalysed reaction is 1-(5-phospho-beta-D-ribosyl)-ATP + diphosphate = 5-phospho-alpha-D-ribose 1-diphosphate + ATP. It participates in amino-acid biosynthesis; L-histidine biosynthesis; L-histidine from 5-phospho-alpha-D-ribose 1-diphosphate: step 1/9. Functionally, catalyzes the condensation of ATP and 5-phosphoribose 1-diphosphate to form N'-(5'-phosphoribosyl)-ATP (PR-ATP). Has a crucial role in the pathway because the rate of histidine biosynthesis seems to be controlled primarily by regulation of HisG enzymatic activity. The protein is ATP phosphoribosyltransferase of Acidithiobacillus ferrooxidans (strain ATCC 23270 / DSM 14882 / CIP 104768 / NCIMB 8455) (Ferrobacillus ferrooxidans (strain ATCC 23270)).